The primary structure comprises 261 residues: Cytochrome c oxidase subunit 3 (261 aa).

Residues 1–15 (MTHQTHAYHMVNPSP) lie on the Mitochondrial matrix side of the membrane. A helical membrane pass occupies residues 16–34 (WPLTGALSALLMTSGLIMW). At 35-40 (FHFNST) the chain is on the mitochondrial intermembrane side. A helical membrane pass occupies residues 41-66 (ALLMLGLTTNMLTMYQWWRDIVREST). Residues 67–72 (FQGHHT) are Mitochondrial matrix-facing. Residues 73–105 (PTVQKGLRYGMILFIISEVLFFTGFFWAFYHSS) form a helical membrane-spanning segment. The Mitochondrial intermembrane portion of the chain corresponds to 106–128 (LAPTPELGGCWPPTGIHPLNPLE). Residues 129–152 (VPLLNTSVLLASGVSITWAHHSLM) traverse the membrane as a helical segment. At 153–155 (EGN) the chain is on the mitochondrial matrix side. Residues 156–183 (RNHMLQALFITIALGVYFTLLQASEYYE) traverse the membrane as a helical segment. Residues 184–190 (APFTISD) are Mitochondrial intermembrane-facing. A helical membrane pass occupies residues 191–223 (GVYGSTFFVATGFHGLHVIIGSTFLIVCFFRQL). Residues 224–232 (KFHFTSNHH) lie on the Mitochondrial matrix side of the membrane. Residues 233 to 256 (FGFEAAAWYWHFVDVVWLFLYVSI) traverse the membrane as a helical segment. Over 257 to 261 (YWWGS) the chain is Mitochondrial intermembrane.

Belongs to the cytochrome c oxidase subunit 3 family. In terms of assembly, component of the cytochrome c oxidase (complex IV, CIV), a multisubunit enzyme composed of 14 subunits. The complex is composed of a catalytic core of 3 subunits MT-CO1, MT-CO2 and MT-CO3, encoded in the mitochondrial DNA, and 11 supernumerary subunits COX4I, COX5A, COX5B, COX6A, COX6B, COX6C, COX7A, COX7B, COX7C, COX8 and NDUFA4, which are encoded in the nuclear genome. The complex exists as a monomer or a dimer and forms supercomplexes (SCs) in the inner mitochondrial membrane with NADH-ubiquinone oxidoreductase (complex I, CI) and ubiquinol-cytochrome c oxidoreductase (cytochrome b-c1 complex, complex III, CIII), resulting in different assemblies (supercomplex SCI(1)III(2)IV(1) and megacomplex MCI(2)III(2)IV(2)).

It localises to the mitochondrion inner membrane. The catalysed reaction is 4 Fe(II)-[cytochrome c] + O2 + 8 H(+)(in) = 4 Fe(III)-[cytochrome c] + 2 H2O + 4 H(+)(out). In terms of biological role, component of the cytochrome c oxidase, the last enzyme in the mitochondrial electron transport chain which drives oxidative phosphorylation. The respiratory chain contains 3 multisubunit complexes succinate dehydrogenase (complex II, CII), ubiquinol-cytochrome c oxidoreductase (cytochrome b-c1 complex, complex III, CIII) and cytochrome c oxidase (complex IV, CIV), that cooperate to transfer electrons derived from NADH and succinate to molecular oxygen, creating an electrochemical gradient over the inner membrane that drives transmembrane transport and the ATP synthase. Cytochrome c oxidase is the component of the respiratory chain that catalyzes the reduction of oxygen to water. Electrons originating from reduced cytochrome c in the intermembrane space (IMS) are transferred via the dinuclear copper A center (CU(A)) of subunit 2 and heme A of subunit 1 to the active site in subunit 1, a binuclear center (BNC) formed by heme A3 and copper B (CU(B)). The BNC reduces molecular oxygen to 2 water molecules using 4 electrons from cytochrome c in the IMS and 4 protons from the mitochondrial matrix. This chain is Cytochrome c oxidase subunit 3 (MT-CO3), found in Cephalophorus natalensis (Natal red duiker).